Consider the following 362-residue polypeptide: Patr class I histocompatibility antigen, A-5 alpha chain (362 aa).

An N-terminal signal peptide occupies residues 1–24 (MQVTAPRTVLLLLSAALALTETWA). An alpha-1 region spans residues 25–114 (GSHSMKYFYT…LRGYYNQSEA (90 aa)). Over 25–308 (GSHSMKYFYT…EPSSQSTIPI (284 aa)) the chain is Extracellular. Asn-110 carries N-linked (GlcNAc...) asparagine glycosylation. The alpha-2 stretch occupies residues 115–206 (GSHIIQRMYG…ENGKETLQRA (92 aa)). Intrachain disulfides connect Cys-125–Cys-188 and Cys-227–Cys-283. Residues 207–298 (DPPKTHVTHH…GLPKPLTLRW (92 aa)) are alpha-3. The region spanning 209–295 (PKTHVTHHPI…QHEGLPKPLT (87 aa)) is the Ig-like C1-type domain. A connecting peptide region spans residues 299–308 (EPSSQSTIPI). The chain crosses the membrane as a helical span at residues 309 to 332 (VGIVAGLAVLAVVVIGAVVAAVMC). The Cytoplasmic portion of the chain corresponds to 333 to 362 (RRKSSGGKGGSYSQAASSDSAQGSDVSLTA). The tract at residues 336–362 (SSGGKGGSYSQAASSDSAQGSDVSLTA) is disordered. Ser-343 carries the phosphoserine modification. The span at 343 to 362 (SYSQAASSDSAQGSDVSLTA) shows a compositional bias: low complexity. Phosphotyrosine is present on Tyr-344. 6 positions are modified to phosphoserine: Ser-345, Ser-349, Ser-350, Ser-352, Ser-356, and Ser-359.

The protein belongs to the MHC class I family. As to quaternary structure, heterodimer of an alpha chain and a beta chain (beta-2-microglobulin).

The protein localises to the membrane. Its function is as follows. Involved in the presentation of foreign antigens to the immune system. The polypeptide is Patr class I histocompatibility antigen, A-5 alpha chain (Pan troglodytes (Chimpanzee)).